The primary structure comprises 204 residues: Somatotropin (204 aa).

The signal sequence occupies residues 1 to 17 (MDRAVLLLSVLSLGVSS). The residue at position 18 (Q18) is a Pyrrolidone carboxylic acid. H35 serves as a coordination point for Zn(2+). C69 and C177 are oxidised to a cystine. E186 serves as a coordination point for Zn(2+). Cysteines 194 and 202 form a disulfide.

This sequence belongs to the somatotropin/prolactin family.

The protein localises to the secreted. In terms of biological role, growth hormone plays an important role in growth control and is involved in the regulation of several anabolic processes. Implicated as an osmoregulatory substance important for seawater adaptation. The polypeptide is Somatotropin (gh) (Morone saxatilis (Striped bass)).